Here is a 250-residue protein sequence, read N- to C-terminus: Probable transcriptional regulatory protein tll0175 (250 aa).

The protein belongs to the TACO1 family.

It is found in the cytoplasm. This is Probable transcriptional regulatory protein tll0175 from Thermosynechococcus vestitus (strain NIES-2133 / IAM M-273 / BP-1).